Consider the following 531-residue polypeptide: CTP synthase (531 aa).

Positions Met-1–Leu-264 are amidoligase domain. Ser-13 serves as a coordination point for CTP. Residue Ser-13 participates in UTP binding. Gly-14–Val-19 is a binding site for ATP. Tyr-54 contributes to the L-glutamine binding site. Asp-71 serves as a coordination point for ATP. The Mg(2+) site is built by Asp-71 and Glu-139. Residues Asp-146–Glu-148, Lys-185–Gln-190, and Lys-221 contribute to the CTP site. UTP contacts are provided by residues Lys-185–Gln-190 and Lys-221. One can recognise a Glutamine amidotransferase type-1 domain in the interval Cys-293–Arg-531. Gly-351 provides a ligand contact to L-glutamine. Cys-378 functions as the Nucleophile; for glutamine hydrolysis in the catalytic mechanism. Residues Phe-379–Gln-382, Glu-402, and Arg-459 each bind L-glutamine. Catalysis depends on residues His-504 and Glu-506.

It belongs to the CTP synthase family. In terms of assembly, homotetramer.

The catalysed reaction is UTP + L-glutamine + ATP + H2O = CTP + L-glutamate + ADP + phosphate + 2 H(+). The enzyme catalyses L-glutamine + H2O = L-glutamate + NH4(+). It carries out the reaction UTP + NH4(+) + ATP = CTP + ADP + phosphate + 2 H(+). The protein operates within pyrimidine metabolism; CTP biosynthesis via de novo pathway; CTP from UDP: step 2/2. Its activity is regulated as follows. Allosterically activated by GTP, when glutamine is the substrate; GTP has no effect on the reaction when ammonia is the substrate. The allosteric effector GTP functions by stabilizing the protein conformation that binds the tetrahedral intermediate(s) formed during glutamine hydrolysis. Inhibited by the product CTP, via allosteric rather than competitive inhibition. Functionally, catalyzes the ATP-dependent amination of UTP to CTP with either L-glutamine or ammonia as the source of nitrogen. Regulates intracellular CTP levels through interactions with the four ribonucleotide triphosphates. The protein is CTP synthase of Pyrobaculum calidifontis (strain DSM 21063 / JCM 11548 / VA1).